The sequence spans 503 residues: Aminoaldehyde dehydrogenase 1, peroxisomal (503 aa).

Na(+)-binding residues include Ile-28, Asp-99, and Leu-189. Position 238-245 (238-245 (GSTMTGSK)) interacts with NAD(+). The active-site Proton acceptor is the Glu-260. Positions 294 and 393 each coordinate NAD(+). The active-site Nucleophile is Cys-294.

This sequence belongs to the aldehyde dehydrogenase family. In terms of tissue distribution, expressed in leaves, flowers and fruits.

It localises to the cytoplasm. It is found in the cytosol. It carries out the reaction 4-aminobutanal + NAD(+) + H2O = 4-aminobutanoate + NADH + 2 H(+). The enzyme catalyses 3-aminopropanal + NAD(+) + H2O = beta-alanine + NADH + 2 H(+). Its pathway is amine and polyamine biosynthesis; betaine biosynthesis via choline pathway; betaine from betaine aldehyde: step 1/1. Dehydrogenase that catalyzes the oxidation of several aminoaldehydes. Metabolizes and detoxifies aldehyde products of polyamine degradation to non-toxic amino acids. Catalyzes the oxidation of 4-aminobutanal and 3-aminopropanal to 4-aminobutanoate and beta-alanine, respectively. The chain is Aminoaldehyde dehydrogenase 1, peroxisomal from Malus domestica (Apple).